Here is a 98-residue protein sequence, read N- to C-terminus: Large ribosomal subunit protein uL23 (98 aa).

This sequence belongs to the universal ribosomal protein uL23 family. In terms of assembly, part of the 50S ribosomal subunit. Contacts protein L29, and trigger factor when it is bound to the ribosome.

Functionally, one of the early assembly proteins it binds 23S rRNA. One of the proteins that surrounds the polypeptide exit tunnel on the outside of the ribosome. Forms the main docking site for trigger factor binding to the ribosome. This is Large ribosomal subunit protein uL23 from Nitrobacter winogradskyi (strain ATCC 25391 / DSM 10237 / CIP 104748 / NCIMB 11846 / Nb-255).